A 246-amino-acid chain; its full sequence is Probable transcriptional regulatory protein RB5500 (246 aa).

It belongs to the TACO1 family.

Its subcellular location is the cytoplasm. This chain is Probable transcriptional regulatory protein RB5500, found in Rhodopirellula baltica (strain DSM 10527 / NCIMB 13988 / SH1).